The following is a 110-amino-acid chain: Large ribosomal subunit protein uL22 (110 aa).

This sequence belongs to the universal ribosomal protein uL22 family. Part of the 50S ribosomal subunit.

Its function is as follows. This protein binds specifically to 23S rRNA; its binding is stimulated by other ribosomal proteins, e.g. L4, L17, and L20. It is important during the early stages of 50S assembly. It makes multiple contacts with different domains of the 23S rRNA in the assembled 50S subunit and ribosome. The globular domain of the protein is located near the polypeptide exit tunnel on the outside of the subunit, while an extended beta-hairpin is found that lines the wall of the exit tunnel in the center of the 70S ribosome. The sequence is that of Large ribosomal subunit protein uL22 from Chromohalobacter salexigens (strain ATCC BAA-138 / DSM 3043 / CIP 106854 / NCIMB 13768 / 1H11).